We begin with the raw amino-acid sequence, 331 residues long: D/L-glyceraldehyde reductase (331 aa).

Residue Tyr-51 is the Proton donor of the active site. His-114 provides a ligand contact to substrate. Residue 213 to 276 participates in NADP(+) binding; that stretch reads SAFGNNTKGL…SVTKARIAEN (64 aa).

This sequence belongs to the aldo/keto reductase family.

The enzyme catalyses glycerol + NADP(+) = L-glyceraldehyde + NADPH + H(+). It catalyses the reaction glycerol + NADP(+) = D-glyceraldehyde + NADPH + H(+). It participates in carbohydrate acid metabolism. Mediates the conversion of L-glyceraldehyde to glycerol in D-galacturonate catabolic process. Also able to reduce D-glyceraldehyde. The chain is D/L-glyceraldehyde reductase (gld1) from Hypocrea jecorina (Trichoderma reesei).